The sequence spans 23 residues: GVIELTKMIVQEMGKNALTSYSL.

Contains 7 disulfide bonds. In terms of tissue distribution, expressed by the venom gland.

It localises to the secreted. The protein is Basic phospholipase A2 homolog of Trimeresurus stejnegeri (Chinese green tree viper).